We begin with the raw amino-acid sequence, 408 residues long: Acetate kinase (408 aa).

N7 lines the Mg(2+) pocket. K14 provides a ligand contact to ATP. Residue R91 participates in substrate binding. Catalysis depends on D148, which acts as the Proton donor/acceptor. ATP is bound by residues 208 to 212, 283 to 285, and 331 to 335; these read HLGNG, DFR, and GIGEN. A Mg(2+)-binding site is contributed by E384.

The protein belongs to the acetokinase family. Homodimer. Mg(2+) is required as a cofactor. It depends on Mn(2+) as a cofactor.

It is found in the cytoplasm. It catalyses the reaction acetate + ATP = acetyl phosphate + ADP. It participates in metabolic intermediate biosynthesis; acetyl-CoA biosynthesis; acetyl-CoA from acetate: step 1/2. Catalyzes the formation of acetyl phosphate from acetate and ATP. Can also catalyze the reverse reaction. In Methanosarcina barkeri (strain Fusaro / DSM 804), this protein is Acetate kinase.